A 147-amino-acid chain; its full sequence is UPF0260 protein CJA_2436 (147 aa).

The protein belongs to the UPF0260 family.

The chain is UPF0260 protein CJA_2436 from Cellvibrio japonicus (strain Ueda107) (Pseudomonas fluorescens subsp. cellulosa).